Here is a 588-residue protein sequence, read N- to C-terminus: Snake venom 5'-nucleotidase (588 aa).

An N-terminal signal peptide occupies residues 1-40; that stretch reads MQTPKRRRGAQGCPRSSPSPPLLLLVRAVWFCAALSVAAG. Zn(2+)-binding residues include aspartate 51 and histidine 53. A disulfide bond links cysteine 66 and cysteine 71. 2 residues coordinate Zn(2+): aspartate 99 and asparagine 131. N-linked (GlcNAc...) asparagine glycosylation is present at asparagine 167. The Zn(2+) site is built by histidine 234 and histidine 257. Residues asparagine 347 and asparagine 361 are each glycosylated (N-linked (GlcNAc...) asparagine). 2 cysteine pairs are disulfide-bonded: cysteine 367/cysteine 372 and cysteine 379/cysteine 401. Residue arginine 368 coordinates AMP. 2 residues coordinate AMP: asparagine 404 and arginine 409. N-linked (GlcNAc...) asparagine glycosylation is present at asparagine 418. An AMP-binding site is contributed by phenylalanine 432. A disulfide bridge connects residues cysteine 491 and cysteine 494. Positions 515 and 521 each coordinate AMP. The N-linked (GlcNAc...) asparagine glycan is linked to asparagine 532. Serine 564 carries GPI-anchor amidated serine lipidation. Residues 565-588 constitute a propeptide, removed in mature form; it reads AGTLFQAQLFLTWGLCVSLLYFIL.

The protein belongs to the 5'-nucleotidase family. Requires Zn(2+) as cofactor. Venom 5'-nucleotidases (or a part thereof) may be released into the venom via exosome-like vesicles. They may be attached via a GPI anchor to the membrane of these vesicles. Soluble forms of 5'-nucleotidase might be released by cleavage of the ectodomain in the exosome-like vesicles or venom gland cells. Expressed by the venom gland.

The protein localises to the membrane. The enzyme catalyses a ribonucleoside 5'-phosphate + H2O = a ribonucleoside + phosphate. Functionally, hydrolyzes nucleotides into nucleosides. Snake venom 5'-nucleotidases are widely distributed among venomous snake taxa, but there is a lack of information about their biological activities. They have been shown to inhibit platelet aggregation. This effect may be due to the liberation of inhibitory AMP or adenosine by its action on ADP released upon initiation of aggregation. Venom 5'-nucleotidases are also known to synergistically act in vivo with other toxins like ADPases, phospholipases, and disintegrins to exert a more pronounced anti-coagulant effect. The polypeptide is Snake venom 5'-nucleotidase (Crotalus adamanteus (Eastern diamondback rattlesnake)).